Consider the following 122-residue polypeptide: MIQVSTHLEVADNSGARIVKCIKVLGGSRRKYAALGDVIVVSIKEALPGTKVKKGETARAVVVRTAREYQRSDGSYIKFDGNSAVLINKEKEPIGTRIFGPVARELRAKKFMKIISLAPEVL.

The protein belongs to the universal ribosomal protein uL14 family. In terms of assembly, part of the 50S ribosomal subunit. Forms a cluster with proteins L3 and L19. In the 70S ribosome, L14 and L19 interact and together make contacts with the 16S rRNA in bridges B5 and B8.

Binds to 23S rRNA. Forms part of two intersubunit bridges in the 70S ribosome. The chain is Large ribosomal subunit protein uL14 from Sorangium cellulosum (strain So ce56) (Polyangium cellulosum (strain So ce56)).